Here is a 647-residue protein sequence, read N- to C-terminus: Transcriptional repressor XBP1 (647 aa).

Polar residues-rich tracts occupy residues 138–148 (SNKTPVSASPT) and 156–170 (STAS…LTKN). Disordered stretches follow at residues 138 to 170 (SNKT…LTKN) and 264 to 295 (LLSS…STSS). Residues 264–282 (LLSSSTSSPPKRRTSTGST) are compositionally biased toward low complexity. One can recognise an HTH APSES-type domain in the interval 282 to 395 (TFLDANASSS…PDFPKDCESW (114 aa)). The H-T-H motif DNA-binding region spans 318–339 (CQSYKDFLINELGPDQIDLPNL). A compositionally biased stretch (low complexity) spans 425-434 (TNFTSTAVAR). 3 disordered regions span residues 425 to 455 (TNFT…HSKA), 485 to 508 (KKNS…GPRD), and 612 to 647 (QNQR…NSKQ). Over residues 435 to 445 (PRQKPRPRPRQ) the composition is skewed to basic residues. Low complexity predominate over residues 493–502 (SSTYTSQTSS).

Its subcellular location is the nucleus. Transcriptional repressor which binds to the consensus sequence 5'-GCCTCGA[G/A]G[C/A]-3'. Represses CLN1 transcription. In Saccharomyces cerevisiae (strain ATCC 204508 / S288c) (Baker's yeast), this protein is Transcriptional repressor XBP1 (XBP1).